The following is a 1120-amino-acid chain: ISWI chromatin-remodeling complex ATPase ISW2 (1120 aa).

Basic and acidic residues predominate over residues 1 to 16; it reads MTTQQEEQRSDTKNSK. 2 disordered regions span residues 1 to 58 and 129 to 153; these read MTTQ…VEDR and LSKS…EDAE. Residues serine 17 and serine 19 each carry the phosphoserine modification. The span at 47-58 shows a compositional bias: basic and acidic residues; that stretch reads LSDKEIYTVEDR. Residues 196 to 361 form the Helicase ATP-binding domain; the sequence is ISLHENKLSG…WALLNFLLPD (166 aa). 209–216 is a binding site for ATP; sequence DEMGLGKT. Positions 312 to 315 match the DEAH box motif; the sequence is DEAH. Residues 494–645 enclose the Helicase C-terminal domain; the sequence is ILDKLLKRLK…QLVIQQGTGK (152 aa). 2 disordered regions span residues 764-783 and 828-853; these read GGGS…PRAP and NEGS…KGHE. Position 831 is a phosphoserine (serine 831). The 53-residue stretch at 886 to 938 folds into the SANT domain; that stretch reads KAFTNWNKRDFMAFINACAKYGRDDMENIKKSIDSKTPEEVEVYAKIFWERLK. The disordered stretch occupies residues 1062–1120; the sequence is PDANKKKRSRTSATREDTPLSQNESTRASTVPNLPTTMVTNQKDTNDHVDKRTKIDQEA. A Phosphothreonine modification is found at threonine 1079. A compositionally biased stretch (polar residues) spans 1080–1104; that stretch reads PLSQNESTRASTVPNLPTTMVTNQK. Phosphoserine is present on serine 1082. Residues 1105–1120 are compositionally biased toward basic and acidic residues; it reads DTNDHVDKRTKIDQEA.

This sequence belongs to the SNF2/RAD54 helicase family. ISWI subfamily. In terms of assembly, component of the ISW2 complex, which at least consists of ISW2, ITC1, DLS1 and DPB4. May form a stable subcomplex with ITC1.

It localises to the nucleus. Functionally, catalytic component of the ISW2 complex, which acts in remodeling the chromatin by catalyzing an ATP-dependent alteration in the structure of nucleosomal DNA. The ISW2 complex is involved in coordinating transcriptional repression and in inheritance of telomeric silencing. It is involved in repression of MAT a-specific genes, INO1, and early meiotic genes during mitotic growth dependent upon transcription factor UME6 and in a parallel pathway to the RPD3-SIN3 histone deacetylase complex. In Saccharomyces cerevisiae (strain ATCC 204508 / S288c) (Baker's yeast), this protein is ISWI chromatin-remodeling complex ATPase ISW2 (ISW2).